Consider the following 299-residue polypeptide: ATP phosphoribosyltransferase (299 aa).

Belongs to the ATP phosphoribosyltransferase family. Long subfamily. Equilibrium between an active dimeric form, an inactive hexameric form and higher aggregates. Interconversion between the various forms is largely reversible and is influenced by the natural substrates and inhibitors of the enzyme. The cofactor is Mg(2+).

It is found in the cytoplasm. The catalysed reaction is 1-(5-phospho-beta-D-ribosyl)-ATP + diphosphate = 5-phospho-alpha-D-ribose 1-diphosphate + ATP. The protein operates within amino-acid biosynthesis; L-histidine biosynthesis; L-histidine from 5-phospho-alpha-D-ribose 1-diphosphate: step 1/9. With respect to regulation, feedback inhibited by histidine. Catalyzes the condensation of ATP and 5-phosphoribose 1-diphosphate to form N'-(5'-phosphoribosyl)-ATP (PR-ATP). Has a crucial role in the pathway because the rate of histidine biosynthesis seems to be controlled primarily by regulation of HisG enzymatic activity. The chain is ATP phosphoribosyltransferase from Escherichia coli O17:K52:H18 (strain UMN026 / ExPEC).